A 220-amino-acid chain; its full sequence is MNILIFGPPGSGKSTQARRITERYGLTYISSGDIIRAEISSRTPLGLEMEKYLSRGDLIPDTIVNTLIISKLRRVRENFIMDGYPRTPEQVIALENYLYDHGIKIDVAIDIFITKEESVRRISGRRICSKCGAVYHIEFNPPKIPGKCDICGGDLIQRPDDRPEIVEKRYDIYMRNMEPIIKFYQKQGIYVKIDGHGSINEVWERIRPLLDYIYNTRSRR.

10 to 15 (GSGKST) contributes to the ATP binding site. Positions 30-59 (SSGDIIRAEISSRTPLGLEMEKYLSRGDLI) are NMP. Residues Ser-31, Arg-36, 57–59 (DLI), 83–86 (GYPR), and Gln-90 contribute to the AMP site. The LID stretch occupies residues 124-161 (GRRICSKCGAVYHIEFNPPKIPGKCDICGGDLIQRPDD). Residue Arg-125 coordinates ATP. Residues Cys-128 and Cys-131 each coordinate Zn(2+). An ATP-binding site is contributed by 134–135 (VY). Zn(2+) contacts are provided by Cys-148 and Cys-151. AMP is bound by residues Arg-158 and Arg-169. Residue Gly-197 coordinates ATP.

Belongs to the adenylate kinase family. As to quaternary structure, monomer.

The protein localises to the cytoplasm. It catalyses the reaction AMP + ATP = 2 ADP. It participates in purine metabolism; AMP biosynthesis via salvage pathway; AMP from ADP: step 1/1. Catalyzes the reversible transfer of the terminal phosphate group between ATP and AMP. Plays an important role in cellular energy homeostasis and in adenine nucleotide metabolism. This is Adenylate kinase from Pyrococcus horikoshii (strain ATCC 700860 / DSM 12428 / JCM 9974 / NBRC 100139 / OT-3).